A 355-amino-acid polypeptide reads, in one-letter code: Replication-associated protein (355 aa).

The CRESS-DNA virus Rep endonuclease domain occupies 11 to 114 (SHRNVNTFLT…PLAVFERGTF (104 aa)). The short motif at 18–21 (FLTY) is the RCR-1 element. 3 residues coordinate a divalent metal cation: E52, H60, and H62. An RCR-2 motif is present at residues 60–62 (HLH). Y100 serves as the catalytic For DNA cleavage activity. Positions 100–103 (YILK) match the RCR-3 motif. E104 serves as a coordination point for a divalent metal cation. Residues 119-128 (SSFQGNPSKG) are compositionally biased toward polar residues. The disordered stretch occupies residues 119-138 (SSFQGNPSKGNSEKKPSKDE). Basic and acidic residues predominate over residues 129–138 (NSEKKPSKDE). The tract at residues 175-187 (SANKLFPEIQEEF) is oligomerization. Residue 229-236 (GPTRTGKS) coordinates ATP. Residues 252–270 (VDWSSYNEDAIYNIVDDIP) form a transactivation region. The Nuclear localization signal motif lies at 292–303 (KYGKKKKVQMKS).

The protein belongs to the geminiviridae Rep protein family. As to quaternary structure, homooligomer. Rep binds to repeated DNA motifs (iterons). Forms the O-complex, which is a Rep-DNA complex involved in the initiation of RCR. Part of the C- and V-complexes which are RepA-Rep-DNA complexes involved in the c-sense and v-sense transcription. Mg(2+) serves as cofactor. It depends on Mn(2+) as a cofactor.

It localises to the host nucleus. Its function is as follows. Essential for the replication of viral ssDNA. The closed circular ssDNA genome is first converted to a superhelical dsDNA. Rep binds a specific region at the genome origin of replication. It introduces an endonucleolytic nick within the conserved sequence 5'-TAATATTAC-3' in the intergenic region of the genome present in all geminiviruses, thereby initiating the rolling circle replication (RCR). Following cleavage, binds covalently to the 5'-phosphate of DNA as a tyrosyl ester. The cleavage gives rise to a free 3'-OH that serves as a primer for the cellular DNA polymerase. The polymerase synthesizes the (+) strand DNA by rolling circle mechanism. After one round of replication, a Rep-catalyzed nucleotidyl transfer reaction releases a circular single-stranded virus genome, thereby terminating the replication. Displays origin-specific DNA cleavage, nucleotidyl transferase, ATPase and helicase activities. Acts as an inhibitor of C-sense gene transcription. This chain is Replication-associated protein, found in Maize streak virus genotype B (isolate Tas) (MSV).